The following is a 323-amino-acid chain: Serpentine receptor class gamma-5 (323 aa).

The next 7 membrane-spanning stretches (helical) occupy residues 31–51, 63–83, 98–117, 151–171, 193–213, 245–265, and 272–292; these read QLFY…IMLF, FIIF…DLFI, YPLF…IYNY, IPVT…NVII, WASL…ITVF, AAFF…ITAA, and FLQG…MVLI.

Belongs to the nematode receptor-like protein srg family.

The protein localises to the membrane. This chain is Serpentine receptor class gamma-5 (srg-5), found in Caenorhabditis elegans.